The following is a 285-amino-acid chain: MTKEMQTLALVPQGSLEAYIRAANAYPMLTAEEERELAERLHYQGDLDAAKQLILSHLRFVAHIARNYSGYGLPQADLIQEGNIGLMKAVRRFNPEVGVRLVSFAVHWIKAEIHEYVLRNWRIVKVATTKAQRKLFFNLRKTKQRLGWFNQDEVELVARELGVTSKDVREMESRMAAQDMTFDPTPDDEARDGQSMAPVLYLQDKSSDFAEGIEEDNWESNAADKLAYALEGLDERSQHIIRARWLDDDNKSTLQELADQYGVSAERVRQLEKNAMKKLKMAIEA.

Positions 53-122 (LILSHLRFVA…IHEYVLRNWR (70 aa)) are sigma-70 factor domain-2. An Interaction with polymerase core subunit RpoC motif is present at residues 77 to 80 (DLIQ). Residues 229-281 (ALEGLDERSQHIIRARWLDDDNKSTLQELADQYGVSAERVRQLEKNAMKKLKM) form a sigma-70 factor domain-4 region. The segment at residues 254–273 (LQELADQYGVSAERVRQLEK) is a DNA-binding region (H-T-H motif).

This sequence belongs to the sigma-70 factor family. RpoH subfamily. As to quaternary structure, interacts with the RNA polymerase core enzyme.

The protein localises to the cytoplasm. In terms of biological role, sigma factors are initiation factors that promote the attachment of RNA polymerase to specific initiation sites and are then released. This sigma factor is involved in regulation of expression of heat shock genes. The chain is RNA polymerase sigma factor RpoH from Serratia marcescens.